Reading from the N-terminus, the 512-residue chain is NADH-quinone oxidoreductase subunit N (512 aa).

14 helical membrane-spanning segments follow: residues 32-52, 57-77, 97-117, 126-146, 151-171, 186-206, 231-251, 264-284, 296-316, 324-344, 348-368, 392-412, 431-451, and 473-493; these read VLPA…SVLF, FIIV…AVFY, VLSF…AAIV, IEFP…TLMT, FILV…LIGM, FLLG…LFGG, IGLV…PYHA, VTGY…LILY, WAWL…LLAL, MLAY…SAGI, VLFY…ILAY, AIAI…GGFW, ILLI…LRIG, and VGVT…WFLL.

The protein belongs to the complex I subunit 2 family. As to quaternary structure, NDH-1 is composed of 14 different subunits. Subunits NuoA, H, J, K, L, M, N constitute the membrane sector of the complex.

It is found in the cell inner membrane. It carries out the reaction a quinone + NADH + 5 H(+)(in) = a quinol + NAD(+) + 4 H(+)(out). Functionally, NDH-1 shuttles electrons from NADH, via FMN and iron-sulfur (Fe-S) centers, to quinones in the respiratory chain. The immediate electron acceptor for the enzyme in this species is believed to be ubiquinone. Couples the redox reaction to proton translocation (for every two electrons transferred, four hydrogen ions are translocated across the cytoplasmic membrane), and thus conserves the redox energy in a proton gradient. The protein is NADH-quinone oxidoreductase subunit N of Leptospira interrogans serogroup Icterohaemorrhagiae serovar Lai (strain 56601).